The chain runs to 188 residues: Crossover junction endodeoxyribonuclease RuvC (188 aa).

Residues D7, E68, and D141 contribute to the active site. Mg(2+) contacts are provided by D7, E68, and D141.

Belongs to the RuvC family. In terms of assembly, homodimer which binds Holliday junction (HJ) DNA. The HJ becomes 2-fold symmetrical on binding to RuvC with unstacked arms; it has a different conformation from HJ DNA in complex with RuvA. In the full resolvosome a probable DNA-RuvA(4)-RuvB(12)-RuvC(2) complex forms which resolves the HJ. Mg(2+) serves as cofactor.

It localises to the cytoplasm. The enzyme catalyses Endonucleolytic cleavage at a junction such as a reciprocal single-stranded crossover between two homologous DNA duplexes (Holliday junction).. The RuvA-RuvB-RuvC complex processes Holliday junction (HJ) DNA during genetic recombination and DNA repair. Endonuclease that resolves HJ intermediates. Cleaves cruciform DNA by making single-stranded nicks across the HJ at symmetrical positions within the homologous arms, yielding a 5'-phosphate and a 3'-hydroxyl group; requires a central core of homology in the junction. The consensus cleavage sequence is 5'-(A/T)TT(C/G)-3'. Cleavage occurs on the 3'-side of the TT dinucleotide at the point of strand exchange. HJ branch migration catalyzed by RuvA-RuvB allows RuvC to scan DNA until it finds its consensus sequence, where it cleaves and resolves the cruciform DNA. In Mycobacterium tuberculosis (strain ATCC 25177 / H37Ra), this protein is Crossover junction endodeoxyribonuclease RuvC.